We begin with the raw amino-acid sequence, 218 residues long: Zinc metalloproteinase-disintegrin-like bothrojarin-2 (218 aa).

The Disintegrin domain occupies 14 to 100 (PPVCGNELLE…QCPTDDFHKN (87 aa)). Ca(2+)-binding residues include Val-16, Leu-21, Glu-23, Glu-26, and Asp-29. Disulfide bonds link Cys-28/Cys-46, Cys-30/Cys-41, Cys-40/Cys-63, Cys-54/Cys-60, Cys-59/Cys-85, Cys-72/Cys-92, Cys-79/Cys-111, Cys-104/Cys-116, Cys-123/Cys-173, and Cys-151/Cys-161. A D/ECD-tripeptide motif is present at residues 78–80 (ECD).

This sequence belongs to the venom metalloproteinase (M12B) family. P-III subfamily. P-IIIa sub-subfamily. As to quaternary structure, monomer. The cofactor is Zn(2+). In terms of processing, glycosylated. In terms of tissue distribution, expressed by the venom gland.

The protein resides in the secreted. Its function is as follows. The hemorrhagic metalloproteinase-disintegrin-like bothrojarin-1 is a potent inhibitor of collagen-induced platelet aggregation by blockage of alpha-2/beta-1 (ITGA2/ITGB1) integrin. It does not present any fibrinogen-clotting activity. This is Zinc metalloproteinase-disintegrin-like bothrojarin-2 from Bothrops jararaca (Jararaca).